The sequence spans 255 residues: Myogenic factor 5 (255 aa).

A bHLH domain is found at 83–134; that stretch reads DRRKAATMRERRRLKKVNQAFETLKRCTTTNPNQRLPKVEILRNAIQYIESL. The segment covering 221 to 242 has biased composition (low complexity); sequence SLPIPDSITPSPTSSTDSLPRS. The segment at 221-246 is disordered; that stretch reads SLPIPDSITPSPTSSTDSLPRSPDAH.

Efficient DNA binding requires dimerization with another bHLH protein.

Its subcellular location is the nucleus. Functionally, acts as a transcriptional activator that promotes transcription of muscle-specific target genes and plays a role in muscle differentiation. Induces fibroblasts to differentiate into myoblasts. Probable sequence specific DNA-binding protein. This Xenopus laevis (African clawed frog) protein is Myogenic factor 5 (myf5).